We begin with the raw amino-acid sequence, 236 residues long: Purine nucleoside phosphorylase DeoD-type (236 aa).

His5 serves as a coordination point for a purine D-ribonucleoside. Phosphate contacts are provided by residues Gly21, Arg25, Arg44, and 88 to 91 (RVGT). Residues 180–182 (EME) and 204–205 (SD) contribute to the a purine D-ribonucleoside site. Asp205 (proton donor) is an active-site residue.

The protein belongs to the PNP/UDP phosphorylase family. As to quaternary structure, homohexamer; trimer of homodimers.

It carries out the reaction a purine D-ribonucleoside + phosphate = a purine nucleobase + alpha-D-ribose 1-phosphate. The enzyme catalyses a purine 2'-deoxy-D-ribonucleoside + phosphate = a purine nucleobase + 2-deoxy-alpha-D-ribose 1-phosphate. Its function is as follows. Catalyzes the reversible phosphorolytic breakdown of the N-glycosidic bond in the beta-(deoxy)ribonucleoside molecules, with the formation of the corresponding free purine bases and pentose-1-phosphate. The chain is Purine nucleoside phosphorylase DeoD-type from Shewanella denitrificans (strain OS217 / ATCC BAA-1090 / DSM 15013).